The following is a 496-amino-acid chain: uncharacterized protein (496 aa).

An N-terminal signal peptide occupies residues 1–19 (MTTGYILIAAILILGGVIA). The helical transmembrane segment at 45–67 (AVLVTILTGGLVSATTLAILFIA) threads the bilayer. Positions 113-137 (LETTRTDKKQVETQRDQAKKEKLKA) are disordered.

The protein localises to the membrane. This is an uncharacterized protein from Nostoc sp. (strain PCC 7120 / SAG 25.82 / UTEX 2576).